The primary structure comprises 708 residues: MTAEPNKPCQIKRDYQQLINLYPATAHTDAHYLSKLSIYQQRVFEAHSQQKLLILGQIGLGNGLELLSWWRTQANPSQRLLLKVFEPNPINAYELKSLWDQSLTLVKETPFEPHLESKQASALECKSKLSQLAQTLLDAEPTAIIGCQRLIFDDGRTTIDLHFGDIQTQLSSLTHSPMHPVQHWLILPHLLQALYHQSQWQMAKLSDDSATIATIGLSESSELSETTVNRFQACGFTVSDINELGTKALGIHQPVTLINHQPDAVLLHERQVLRQQDAKAYAFNPMAAILSSPTQSSIAIIGGGLASAHLTLSLAERGQGAQVFCKDAELGQGASGNRQGAIYPLLTTENDELSRFFQQAFLFSRRRVQALTSAPADNQTPISHNFCGVLQTAHDERSQLRLDKIIQGQPWPSEIAYAVDAEQANAIAKINLDKPGFFYPLGGWVCPFEYADAAIQKAMQLADVSVSLNTDILAIERQADGWVLLTEKERFGPFAQLVLANGAELTQFDASNKLQISPFRGQVSHVPAQFQLSQLATVLCANGYLTPSHQGLHCLGASYVKEPEHLDFCSQEQQENLMKMHESYPNQSWLEDIDMSGNNARIGVRMVTRDHFPMMGCAPDVAKILEDYEQHQLTKESRHYWQTTPAPVHQGLYILGGLGSRGLSSGPLAAECLAAQLCGEPIPLDKETLCKLNPNRMWLRKLLKGKAL.

Positions 1–278 (MTAEPNKPCQ…ERQVLRQQDA (278 aa)) are tRNA (mnm(5)s(2)U34)-methyltransferase. Residues 301-708 (IGGGLASAHL…LRKLLKGKAL (408 aa)) form an FAD-dependent cmnm(5)s(2)U34 oxidoreductase region.

It in the N-terminal section; belongs to the methyltransferase superfamily. tRNA (mnm(5)s(2)U34)-methyltransferase family. The protein in the C-terminal section; belongs to the DAO family. FAD serves as cofactor.

The protein localises to the cytoplasm. The enzyme catalyses 5-aminomethyl-2-thiouridine(34) in tRNA + S-adenosyl-L-methionine = 5-methylaminomethyl-2-thiouridine(34) in tRNA + S-adenosyl-L-homocysteine + H(+). In terms of biological role, catalyzes the last two steps in the biosynthesis of 5-methylaminomethyl-2-thiouridine (mnm(5)s(2)U) at the wobble position (U34) in tRNA. Catalyzes the FAD-dependent demodification of cmnm(5)s(2)U34 to nm(5)s(2)U34, followed by the transfer of a methyl group from S-adenosyl-L-methionine to nm(5)s(2)U34, to form mnm(5)s(2)U34. This is tRNA 5-methylaminomethyl-2-thiouridine biosynthesis bifunctional protein MnmC from Shewanella baltica (strain OS195).